Reading from the N-terminus, the 163-residue chain is Nucleotide-binding protein Dhaf_3127 (163 aa).

The protein belongs to the YajQ family.

Functionally, nucleotide-binding protein. This chain is Nucleotide-binding protein Dhaf_3127, found in Desulfitobacterium hafniense (strain DSM 10664 / DCB-2).